The chain runs to 350 residues: Ribosomal RNA small subunit methyltransferase C (350 aa).

The protein belongs to the methyltransferase superfamily. RsmC family. In terms of assembly, monomer.

Its subcellular location is the cytoplasm. It catalyses the reaction guanosine(1207) in 16S rRNA + S-adenosyl-L-methionine = N(2)-methylguanosine(1207) in 16S rRNA + S-adenosyl-L-homocysteine + H(+). Its function is as follows. Specifically methylates the guanine in position 1207 of 16S rRNA in the 30S particle. The polypeptide is Ribosomal RNA small subunit methyltransferase C (Sodalis glossinidius (strain morsitans)).